The sequence spans 346 residues: Phenylalanine--tRNA ligase alpha subunit (346 aa).

Glu261 contacts Mg(2+).

The protein belongs to the class-II aminoacyl-tRNA synthetase family. Phe-tRNA synthetase alpha subunit type 1 subfamily. In terms of assembly, tetramer of two alpha and two beta subunits. Mg(2+) is required as a cofactor.

The protein resides in the cytoplasm. The catalysed reaction is tRNA(Phe) + L-phenylalanine + ATP = L-phenylalanyl-tRNA(Phe) + AMP + diphosphate + H(+). This is Phenylalanine--tRNA ligase alpha subunit from Dehalococcoides mccartyi (strain ATCC BAA-2100 / JCM 16839 / KCTC 5957 / BAV1).